Here is a 766-residue protein sequence, read N- to C-terminus: Pentatricopeptide repeat-containing protein At3g61520, mitochondrial (766 aa).

The N-terminal 30 residues, 1 to 30 (MSIMLSISRRRNSYILLNHSRFLRRFSYDV), are a transit peptide targeting the mitochondrion. 16 PPR repeats span residues 151 to 181 (TVVA…LDSN), 184 to 218 (NSQV…ESVF), 221 to 257 (NRIT…GVSP), 258 to 292 (NSVW…KTPL), 293 to 327 (EAPP…KIRP), 328 to 358 (DVVT…MRGK), 369 to 404 (DSIH…RCAP), 405 to 439 (NAVT…EIKP), 440 to 474 (NVVT…GVKG), 475 to 509 (NVVT…GCSP), 510 to 544 (DAKI…GFSL), 545 to 579 (DLLA…GKKP), 580 to 614 (DSIT…GLDP), 615 to 650 (TVTT…KVNP), 651 to 685 (NTVI…MVRP), and 686 to 720 (NVET…SCEP).

This sequence belongs to the PPR family. P subfamily.

The protein resides in the mitochondrion. The polypeptide is Pentatricopeptide repeat-containing protein At3g61520, mitochondrial (Arabidopsis thaliana (Mouse-ear cress)).